The primary structure comprises 390 residues: MANITTKETPPTTPDLLKSPYQKIINASVSVFDETHGRSFFSPQFYEKIEPYLKEVLTHPIGLECDLNTAKKTNRLTPLKQLFKVCFDTEEVLIVNNNTSTVFLIANALAQQKEIIVSYGELVGGDFNLKDILLSSGARLHLVGNTNRAYLRDYRLALNENSKMLFKTHNPTFKKDTSFKDLQALAKEHGLIDYYNLGDVDLLNRTALEEILALKPSLVSFSADKSFNSAQAGIIMGQKEWVETLKNHPLYRALRVGKITLTLLFHSLNAWVNHQEEITIHALLHQTKDALLQKALKLYALLKPLELNVSIASSFSKIGNLPDKELESFCVKVQPKNTRALNCEKLYLKLFQKGVITRISCAFVCFEVFSLNGEDLEKIALVLKEILNKA.

Position 225 is an N6-(pyridoxal phosphate)lysine (Lys225).

Belongs to the SelA family. Requires pyridoxal 5'-phosphate as cofactor.

Its subcellular location is the cytoplasm. The enzyme catalyses L-seryl-tRNA(Sec) + selenophosphate + H(+) = L-selenocysteinyl-tRNA(Sec) + phosphate. It participates in aminoacyl-tRNA biosynthesis; selenocysteinyl-tRNA(Sec) biosynthesis; selenocysteinyl-tRNA(Sec) from L-seryl-tRNA(Sec) (bacterial route): step 1/1. Its function is as follows. Converts seryl-tRNA(Sec) to selenocysteinyl-tRNA(Sec) required for selenoprotein biosynthesis. This Helicobacter pylori (strain J99 / ATCC 700824) (Campylobacter pylori J99) protein is L-seryl-tRNA(Sec) selenium transferase.